Reading from the N-terminus, the 161-residue chain is Phosphopantetheine adenylyltransferase (161 aa).

S11 provides a ligand contact to substrate. ATP-binding positions include 11-12 (SF) and H19. Substrate contacts are provided by K43, L75, and R89. Residues 90 to 92 (GLR), E100, and 125 to 131 (YSYLSSS) contribute to the ATP site.

This sequence belongs to the bacterial CoaD family. In terms of assembly, homohexamer. It depends on Mg(2+) as a cofactor.

It is found in the cytoplasm. The catalysed reaction is (R)-4'-phosphopantetheine + ATP + H(+) = 3'-dephospho-CoA + diphosphate. It participates in cofactor biosynthesis; coenzyme A biosynthesis; CoA from (R)-pantothenate: step 4/5. In terms of biological role, reversibly transfers an adenylyl group from ATP to 4'-phosphopantetheine, yielding dephospho-CoA (dPCoA) and pyrophosphate. The sequence is that of Phosphopantetheine adenylyltransferase from Citrifermentans bemidjiense (strain ATCC BAA-1014 / DSM 16622 / JCM 12645 / Bem) (Geobacter bemidjiensis).